The primary structure comprises 210 residues: Adenylate kinase isoenzyme 1 (210 aa).

30-35 lines the ATP pocket; it reads GSGKGT. Residues 50–79 form an NMP region; that stretch reads SSGDLLRDEVKSGSPRGAQLTAIMESGALV. AMP-binding positions include Ser51, Arg56, 77–79, 107–110, and Gln114; these read ALV and GYPR. The LID stretch occupies residues 144–154; the sequence is HRAQTSGRADD. Arg145 is a binding site for ATP. AMP contacts are provided by Arg151 and Arg162. Gly190 contacts ATP.

Belongs to the adenylate kinase family. AK1 subfamily. In terms of assembly, monomer.

The protein localises to the cytoplasm. The catalysed reaction is AMP + ATP = 2 ADP. Its function is as follows. Catalyzes the reversible transfer of the terminal phosphate group between ATP and AMP. Plays an important role in cellular energy homeostasis and in adenine nucleotide metabolism. The sequence is that of Adenylate kinase isoenzyme 1 from Caenorhabditis elegans.